Reading from the N-terminus, the 179-residue chain is Replication restart protein DnaT (179 aa).

The tract at residues 156–179 is disordered; that stretch reads GGLPKRDVNTVSEPDSQIPPGFRG.

This sequence belongs to the DnaT family. In terms of assembly, homooligomerizes. Interacts with PriB. Component of the replication restart primosome. Primosome assembly occurs via a 'hand-off' mechanism. PriA binds to replication forks, subsequently PriB then DnaT bind; DnaT then displaces ssDNA to generate the helicase loading substrate.

Its function is as follows. Involved in the restart of stalled replication forks, which reloads the replicative helicase on sites other than the origin of replication. Can function in multiple replication restart pathways. Displaces ssDNA from a PriB-ssDNA complex. Probably forms a spiral filament on ssDNA. The protein is Replication restart protein DnaT of Shigella dysenteriae serotype 1 (strain Sd197).